The chain runs to 219 residues: GPI-anchored hemophore PGA7 (219 aa).

An N-terminal signal peptide occupies residues 1–13 (MHFIFYLILLVSA). The CFEM domain occupies 17 to 126 (GNFGTYPKVP…SMLSTAAGDA (110 aa)). 4 disulfides stabilise this stretch: Cys-45/Cys-85, Cys-49/Cys-80, Cys-59/Cys-66, and Cys-68/Cys-101. A heme-binding site is contributed by Asp-63. A disordered region spans residues 151 to 194 (VVSETGSASETGSSESAQSTTTGSSSTGSSSTDSSSSSSSSPSS). A compositionally biased stretch (low complexity) spans 153-194 (SETGSASETGSSESAQSTTTGSSSTGSSSTDSSSSSSSSPSS). Ser-194 is lipidated: GPI-anchor amidated serine. Positions 195-219 (SANFAVLQTGGIGSVILGFMMYLLV) are cleaved as a propeptide — removed in mature form.

It belongs to the RBT5 family. As to quaternary structure, interacts with RBT5. In terms of processing, the GPI-anchor is attached to the protein in the endoplasmic reticulum and serves to target the protein to the cell surface. There, the glucosamine-inositol phospholipid moiety is cleaved off and the GPI-modified mannoprotein is covalently attached via its lipidless GPI glycan remnant to the 1,6-beta-glucan of the outer cell wall layer.

It is found in the secreted. The protein resides in the cell wall. It localises to the cell membrane. Functionally, GPI-linked hyphal surface heme-binding protein involved in heme-iron utilization. Heme transfer occurs between PGA7, RBT5 and CSA2 supporting a model in which the 3 CFEM proteins cooperate in a heme-acquisition system and form a cross-cell wall heme-transfer cascade. The ability to acquire iron from host tissues is a major virulence factor of pathogenic microorganisms. Required for biofilm formation. This chain is GPI-anchored hemophore PGA7, found in Candida albicans (strain SC5314 / ATCC MYA-2876) (Yeast).